A 385-amino-acid chain; its full sequence is Carbohydrate diacid regulator (385 aa).

It belongs to the CdaR family.

In terms of biological role, seems to regulate the expression of the operons for the enzymes involved in D-galactarate, D-glucarate and D-glycerate utilization. In Escherichia coli (strain K12), this protein is Carbohydrate diacid regulator (cdaR).